A 91-amino-acid polypeptide reads, in one-letter code: Small ribosomal subunit protein uS19 (91 aa).

The protein belongs to the universal ribosomal protein uS19 family.

Its function is as follows. Protein S19 forms a complex with S13 that binds strongly to the 16S ribosomal RNA. The polypeptide is Small ribosomal subunit protein uS19 (Prochlorococcus marinus (strain NATL1A)).